The primary structure comprises 155 residues: Ribosome maturation factor RimP (155 aa).

This sequence belongs to the RimP family.

It is found in the cytoplasm. In terms of biological role, required for maturation of 30S ribosomal subunits. In Macrococcus caseolyticus (strain JCSC5402) (Macrococcoides caseolyticum), this protein is Ribosome maturation factor RimP.